A 400-amino-acid chain; its full sequence is Phosphoglycerate kinase (400 aa).

Residues 23 to 25 (DLN), arginine 38, 61 to 64 (HFGR), arginine 120, and arginine 153 contribute to the substrate site. Residues lysine 203, glutamate 325, and 355-358 (GGDT) each bind ATP.

The protein belongs to the phosphoglycerate kinase family. In terms of assembly, monomer.

Its subcellular location is the cytoplasm. The enzyme catalyses (2R)-3-phosphoglycerate + ATP = (2R)-3-phospho-glyceroyl phosphate + ADP. Its pathway is carbohydrate degradation; glycolysis; pyruvate from D-glyceraldehyde 3-phosphate: step 2/5. In Methylorubrum populi (strain ATCC BAA-705 / NCIMB 13946 / BJ001) (Methylobacterium populi), this protein is Phosphoglycerate kinase.